Here is a 486-residue protein sequence, read N- to C-terminus: Protein nucleotidyltransferase YdiU (486 aa).

Gly90, Gly92, Arg93, Lys113, Asp125, Gly126, Arg176, and Arg183 together coordinate ATP. The Proton acceptor role is filled by Asp252. 2 residues coordinate Mg(2+): Asn253 and Asp262. Asp262 contributes to the ATP binding site.

This sequence belongs to the SELO family. Mg(2+) serves as cofactor. Mn(2+) is required as a cofactor.

The enzyme catalyses L-seryl-[protein] + ATP = 3-O-(5'-adenylyl)-L-seryl-[protein] + diphosphate. It carries out the reaction L-threonyl-[protein] + ATP = 3-O-(5'-adenylyl)-L-threonyl-[protein] + diphosphate. The catalysed reaction is L-tyrosyl-[protein] + ATP = O-(5'-adenylyl)-L-tyrosyl-[protein] + diphosphate. It catalyses the reaction L-histidyl-[protein] + UTP = N(tele)-(5'-uridylyl)-L-histidyl-[protein] + diphosphate. The enzyme catalyses L-seryl-[protein] + UTP = O-(5'-uridylyl)-L-seryl-[protein] + diphosphate. It carries out the reaction L-tyrosyl-[protein] + UTP = O-(5'-uridylyl)-L-tyrosyl-[protein] + diphosphate. Nucleotidyltransferase involved in the post-translational modification of proteins. It can catalyze the addition of adenosine monophosphate (AMP) or uridine monophosphate (UMP) to a protein, resulting in modifications known as AMPylation and UMPylation. This chain is Protein nucleotidyltransferase YdiU, found in Pseudomonas aeruginosa (strain ATCC 15692 / DSM 22644 / CIP 104116 / JCM 14847 / LMG 12228 / 1C / PRS 101 / PAO1).